Here is a 590-residue protein sequence, read N- to C-terminus: MKDKAAATMEIPEDPGIPKNLERKRPIVWRMIYYSFAVLLLAAFTAAYVTEFQILTHEDVLFSLGLYGLVMFLHLMMQSLFAYLEIRRINKTDLPCSFKKTVALTIAGYQENPDYLKHCLDSCRYVKYPKDKLKIILVIDGNTEDDAYMMEMFKDVFHGDDVGTYVWKGNYHTGVKETQDGSCPEVSKPLNEDEGIRIVEELVRTKRCVCIMQQWGGKREVMYTAFRAIGTTMDYVQVCDSDTKLDELATVEMVKVLEANELCGAVGGDVRILNPYDSFISFMSSLRYWMAFNVERACQSYFDCVSCISGPLGMYRNDILQVFLEAWHSQKFLGTYCTLGDDRHLTNRVLSMGYRTKYTPKCRAFSETPSQYLRWLNQQTRWTKSYFREWLYNAQWWYKHHIWMTYESVVHFIFPFFITATVIRLLYASTIWNVVWLLLCIQIMSVLKSLYACWLRGNPIMLLMSLYSMLYMTGLLPSKYFAMLTINKSGWGTSGRKKIVGNYMPVLPLSIWMAVLCGGVGYSIYMDCHQDWSTPEKQKELYHLLYGCISYTLYWVLMALMYWVWVKRCCRKRSQTVTLVHDIPERLVCK.

Over 1-31 (MKDKAAATMEIPEDPGIPKNLERKRPIVWRM) the chain is Cytoplasmic. The chain crosses the membrane as a helical span at residues 32–52 (IYYSFAVLLLAAFTAAYVTEF). Residues 53–60 (QILTHEDV) are Extracellular-facing. A helical transmembrane segment spans residues 61 to 81 (LFSLGLYGLVMFLHLMMQSLF). Residues 82–401 (AYLEIRRINK…YNAQWWYKHH (320 aa)) lie on the Cytoplasmic side of the membrane. Residues 402–422 (IWMTYESVVHFIFPFFITATV) traverse the membrane as a helical segment. Topologically, residues 423–425 (IRL) are extracellular. Residues 426-446 (LYASTIWNVVWLLLCIQIMSV) form a helical membrane-spanning segment. Topologically, residues 447–456 (LKSLYACWLR) are cytoplasmic. Residues 457 to 477 (GNPIMLLMSLYSMLYMTGLLP) traverse the membrane as a helical segment. Residues 478-505 (SKYFAMLTINKSGWGTSGRKKIVGNYMP) are Extracellular-facing. The chain crosses the membrane as a helical span at residues 506–526 (VLPLSIWMAVLCGGVGYSIYM). The Cytoplasmic segment spans residues 527–543 (DCHQDWSTPEKQKELYH). Residues 544 to 564 (LLYGCISYTLYWVLMALMYWV) form a helical membrane-spanning segment. At 565–588 (WVKRCCRKRSQTVTLVHDIPERLV) the chain is on the extracellular side.

Belongs to the NodC/HAS family. Mg(2+) serves as cofactor.

Its subcellular location is the membrane. It carries out the reaction [hyaluronan](n) + UDP-N-acetyl-alpha-D-glucosamine = N-acetyl-beta-D-glucosaminyl-(1-&gt;4)-[hyaluronan](n) + UDP + H(+). The catalysed reaction is N-acetyl-beta-D-glucosaminyl-(1-&gt;4)-[hyaluronan](n) + UDP-alpha-D-glucuronate = [hyaluronan](n+1) + UDP + H(+). Its pathway is glycan biosynthesis; hyaluronan biosynthesis. Its function is as follows. Catalyzes the addition of GlcNAc or GlcUA monosaccharides to the nascent hyaluronan polymer. Therefore, it is essential to hyaluronan synthesis a major component of most extracellular matrices that has a structural role in tissues architectures and regulates cell adhesion, migration and differentiation. Also able to catalyze the synthesis of chito-oligosaccharide depending on the substrate. This chain is Hyaluronan synthase 1 (has1), found in Xenopus tropicalis (Western clawed frog).